The primary structure comprises 291 residues: MFFEFALIGTTASGKTELANKLAYEFNASILSLDSLCVYKQINIASAKTEQKTLDELDYFGINLLNVNEHFNIALFFEEYKKAKTFAQKNNQILIITGGTSFYLKALMDGLSENFKESQSTLSNDEIYHLMIKIDPQAKIEKNDTYRLKKWLGIYEQTNKIPSEVLKETKQEALIKKLDIFEISWQKDLLEKRIIKRTKNMLNEGLIEEAKMLFDNYDHHLKALNSIGLKECKDFLDKKINLNKLEELIIIHTRQLAKRQRTFNKKFNKENLDFQSAYENLKAYILKKYQG.

Residue 9–16 (GTTASGKT) participates in ATP binding. 11–16 (TASGKT) contacts substrate. Residues 34–37 (DSLC) form an interaction with substrate tRNA region.

The protein belongs to the IPP transferase family. In terms of assembly, monomer. The cofactor is Mg(2+).

It carries out the reaction adenosine(37) in tRNA + dimethylallyl diphosphate = N(6)-dimethylallyladenosine(37) in tRNA + diphosphate. In terms of biological role, catalyzes the transfer of a dimethylallyl group onto the adenine at position 37 in tRNAs that read codons beginning with uridine, leading to the formation of N6-(dimethylallyl)adenosine (i(6)A). In Campylobacter lari (strain RM2100 / D67 / ATCC BAA-1060), this protein is tRNA dimethylallyltransferase.